Reading from the N-terminus, the 154-residue chain is 6,7-dimethyl-8-ribityllumazine synthase (154 aa).

Residues Phe22, 56–58 (AFE), and 80–82 (AVI) contribute to the 5-amino-6-(D-ribitylamino)uracil site. 85-86 (AT) is a binding site for (2S)-2-hydroxy-3-oxobutyl phosphate. His88 serves as the catalytic Proton donor. 5-amino-6-(D-ribitylamino)uracil is bound at residue Phe113. Arg127 provides a ligand contact to (2S)-2-hydroxy-3-oxobutyl phosphate.

This sequence belongs to the DMRL synthase family.

The enzyme catalyses (2S)-2-hydroxy-3-oxobutyl phosphate + 5-amino-6-(D-ribitylamino)uracil = 6,7-dimethyl-8-(1-D-ribityl)lumazine + phosphate + 2 H2O + H(+). It functions in the pathway cofactor biosynthesis; riboflavin biosynthesis; riboflavin from 2-hydroxy-3-oxobutyl phosphate and 5-amino-6-(D-ribitylamino)uracil: step 1/2. In terms of biological role, catalyzes the formation of 6,7-dimethyl-8-ribityllumazine by condensation of 5-amino-6-(D-ribitylamino)uracil with 3,4-dihydroxy-2-butanone 4-phosphate. This is the penultimate step in the biosynthesis of riboflavin. In Clostridium botulinum (strain ATCC 19397 / Type A), this protein is 6,7-dimethyl-8-ribityllumazine synthase.